We begin with the raw amino-acid sequence, 148 residues long: uncharacterized protein (148 aa).

The segment covering 65–79 (VDSTPSVDSTGSTSD) has biased composition (low complexity). The interval 65–85 (VDSTPSVDSTGSTSDVVDDRG) is disordered.

This is an uncharacterized protein from Saccharomyces cerevisiae (strain ATCC 204508 / S288c) (Baker's yeast).